The chain runs to 879 residues: Phosphoenolpyruvate carboxylase (879 aa).

Catalysis depends on residues His-138 and Lys-545.

It belongs to the PEPCase type 1 family. Requires Mg(2+) as cofactor.

The enzyme catalyses oxaloacetate + phosphate = phosphoenolpyruvate + hydrogencarbonate. In terms of biological role, forms oxaloacetate, a four-carbon dicarboxylic acid source for the tricarboxylic acid cycle. The chain is Phosphoenolpyruvate carboxylase from Histophilus somni (strain 2336) (Haemophilus somnus).